Reading from the N-terminus, the 457-residue chain is Tryptophan aminotransferase-related protein 3 (457 aa).

Residues 6-26 (LLIAGSIILNLVFTIHILYNN) form a helical membrane-spanning segment. Pyridoxal 5'-phosphate is bound by residues Y123, 163-164 (AT), N237, 257-260 (DYAY), 280-283 (SLSK), and R291. An N6-(pyridoxal phosphate)lysine modification is found at K283.

Belongs to the alliinase family. The cofactor is pyridoxal 5'-phosphate.

The protein localises to the membrane. In terms of biological role, probable aminotransferase. The chain is Tryptophan aminotransferase-related protein 3 (TAR3) from Arabidopsis thaliana (Mouse-ear cress).